A 589-amino-acid polypeptide reads, in one-letter code: V-type ATP synthase alpha chain (589 aa).

G239 to T246 serves as a coordination point for ATP.

It belongs to the ATPase alpha/beta chains family.

The catalysed reaction is ATP + H2O + 4 H(+)(in) = ADP + phosphate + 5 H(+)(out). Its function is as follows. Produces ATP from ADP in the presence of a proton gradient across the membrane. The V-type alpha chain is a catalytic subunit. In Treponema denticola (strain ATCC 35405 / DSM 14222 / CIP 103919 / JCM 8153 / KCTC 15104), this protein is V-type ATP synthase alpha chain.